The sequence spans 369 residues: Histone deacetylase-like amidohydrolase (369 aa).

The active-site Proton donor/acceptor is His-143. Residues Asp-180, His-182, and Asp-268 each contribute to the Zn(2+) site.

The protein belongs to the histone deacetylase family. Homotetramer; dimer of dimers. Requires Zn(2+) as cofactor.

Zinc, and cobalt and nickel at a lesser extent, are able to increase the catalytic activity (2.2-, 1.3- and 1.1-fold respectively) at concentrations of 1 mM. Higher concentrations have an inhibitory effect. Magnesium, manganese and calcium have no effect on activity at concentrations between 0 and 10 mM. At 100 mM, the catalytic activity is increased between 1.2- and 2.1-fold. Hydroxamates like TSA and SAHA inhibit the enzyme. Is also inhibited by azobenzenes, stilbenes and arylazopyrazoles. Its function is as follows. Exhibits significant levels of protein deacetylase activity comparable to those of eukaryotic HDACs in assays both with fluorogenic peptidic substrates and acetate-radiolabeled histones. Accepts proteins with epsilon-acetylated lysine residues and tritiated-acetate-prelabeled chicken histones as substrates. The natural substrate protein is not yet known. The sequence is that of Histone deacetylase-like amidohydrolase (hdaH) from Alcaligenes sp. (strain DSM 11172) (Bordetella sp. (strain FB188)).